We begin with the raw amino-acid sequence, 163 residues long: Endoribonuclease YbeY (163 aa).

Residues histidine 126, histidine 130, and histidine 136 each contribute to the Zn(2+) site.

It belongs to the endoribonuclease YbeY family. Zn(2+) is required as a cofactor.

Its subcellular location is the cytoplasm. Functionally, single strand-specific metallo-endoribonuclease involved in late-stage 70S ribosome quality control and in maturation of the 3' terminus of the 16S rRNA. The protein is Endoribonuclease YbeY of Chelativorans sp. (strain BNC1).